Reading from the N-terminus, the 466-residue chain is Glutamate--tRNA ligase (466 aa).

The short motif at 10–20 is the 'HIGH' region element; sequence PSPTGFLHIGG. The short motif at 252–256 is the 'KMSKS' region element; the sequence is KLSKR. Position 255 (K255) interacts with ATP.

It belongs to the class-I aminoacyl-tRNA synthetase family. Glutamate--tRNA ligase type 1 subfamily. In terms of assembly, monomer.

The protein resides in the cytoplasm. It catalyses the reaction tRNA(Glu) + L-glutamate + ATP = L-glutamyl-tRNA(Glu) + AMP + diphosphate. Catalyzes the attachment of glutamate to tRNA(Glu) in a two-step reaction: glutamate is first activated by ATP to form Glu-AMP and then transferred to the acceptor end of tRNA(Glu). The protein is Glutamate--tRNA ligase of Mycoplasmopsis synoviae (strain 53) (Mycoplasma synoviae).